The chain runs to 480 residues: Glucosylglycerol phosphorylase (480 aa).

Residue Asp190 is the Nucleophile of the active site. Tyr194 provides a ligand contact to substrate. Glu231 (proton donor) is an active-site residue. Gln336 serves as a coordination point for substrate.

This sequence belongs to the glycosyl hydrolase 13 family. Sucrose phosphorylase subfamily.

It carries out the reaction 2-O-(alpha-D-glucopyranosyl)glycerol + phosphate = alpha-D-glucose 1-phosphate + glycerol. In terms of biological role, catalyzes the reversible phosphorolysis of 2-O-alpha-D-glucosylglycerol with retention of the anomeric configuration, forming alpha-D-glucose 1-phosphate and glycerol. Has most likely a catabolic role, either regulating the intracellular levels of glucosylglycerol, which acts as a compatible solute, or degrading it when the environmental conditions change. Cannot catalyze the phosphorolysis of sucrose or glucosylglycerate. This chain is Glucosylglycerol phosphorylase, found in Marinobacter adhaerens (strain DSM 23420 / HP15).